A 61-amino-acid polypeptide reads, in one-letter code: Insect toxin LqhIT5 (61 aa).

In terms of domain architecture, LCN-type CS-alpha/beta spans 1 to 61; sequence DGYIRGGDGC…EWKYETNTCG (61 aa). 4 cysteine pairs are disulfide-bonded: Cys10-Cys60, Cys14-Cys35, Cys21-Cys42, and Cys25-Cys44.

This sequence belongs to the long (4 C-C) scorpion toxin superfamily. Sodium channel inhibitor family. Beta subfamily. Expressed by the venom gland.

The protein localises to the secreted. Functionally, excitatory insect beta-toxins induce a spastic paralysis. They bind voltage-independently at site-4 of sodium channels (Nav) and shift the voltage of activation toward more negative potentials thereby affecting sodium channel activation and promoting spontaneous and repetitive firing. This toxin is active only on insects. It operates by inducing a fast contraction paralysis without depressant activity. It is more similar to the excitatory toxins in its mode of action and the depressant toxins in its primary structure. The polypeptide is Insect toxin LqhIT5 (Leiurus hebraeus (Hebrew deathstalker scorpion)).